The chain runs to 158 residues: 2-C-methyl-D-erythritol 2,4-cyclodiphosphate synthase (158 aa).

2 residues coordinate a divalent metal cation: Asp9 and His11. Residues 9–11 and 35–36 each bind 4-CDP-2-C-methyl-D-erythritol 2-phosphate; these read DVH and HS. Residue His43 participates in a divalent metal cation binding. 4-CDP-2-C-methyl-D-erythritol 2-phosphate contacts are provided by residues 57–59, 62–66, 101–107, 133–136, Phe140, and Arg143; these read DIG, FPDTD, AQKPKMA, and TTTE.

Belongs to the IspF family. As to quaternary structure, homotrimer. Requires a divalent metal cation as cofactor.

It catalyses the reaction 4-CDP-2-C-methyl-D-erythritol 2-phosphate = 2-C-methyl-D-erythritol 2,4-cyclic diphosphate + CMP. It participates in isoprenoid biosynthesis; isopentenyl diphosphate biosynthesis via DXP pathway; isopentenyl diphosphate from 1-deoxy-D-xylulose 5-phosphate: step 4/6. In terms of biological role, involved in the biosynthesis of isopentenyl diphosphate (IPP) and dimethylallyl diphosphate (DMAPP), two major building blocks of isoprenoid compounds. Catalyzes the conversion of 4-diphosphocytidyl-2-C-methyl-D-erythritol 2-phosphate (CDP-ME2P) to 2-C-methyl-D-erythritol 2,4-cyclodiphosphate (ME-CPP) with a corresponding release of cytidine 5-monophosphate (CMP). The protein is 2-C-methyl-D-erythritol 2,4-cyclodiphosphate synthase of Bacillus licheniformis (strain ATCC 14580 / DSM 13 / JCM 2505 / CCUG 7422 / NBRC 12200 / NCIMB 9375 / NCTC 10341 / NRRL NRS-1264 / Gibson 46).